The following is a 404-amino-acid chain: Cysteine desulfurase IscS (404 aa).

Pyridoxal 5'-phosphate is bound by residues 75–76, Asn-155, Gln-183, and 203–205; these read AT and TSH. Position 206 is an N6-(pyridoxal phosphate)lysine (Lys-206). A pyridoxal 5'-phosphate-binding site is contributed by Thr-243. Cys-328 (cysteine persulfide intermediate) is an active-site residue. Cys-328 serves as a coordination point for [2Fe-2S] cluster.

This sequence belongs to the class-V pyridoxal-phosphate-dependent aminotransferase family. NifS/IscS subfamily. In terms of assembly, homodimer. Forms a heterotetramer with IscU, interacts with other sulfur acceptors. The cofactor is pyridoxal 5'-phosphate.

The protein resides in the cytoplasm. It carries out the reaction (sulfur carrier)-H + L-cysteine = (sulfur carrier)-SH + L-alanine. It participates in cofactor biosynthesis; iron-sulfur cluster biosynthesis. Its function is as follows. Master enzyme that delivers sulfur to a number of partners involved in Fe-S cluster assembly, tRNA modification or cofactor biosynthesis. Catalyzes the removal of elemental sulfur atoms from cysteine to produce alanine. Functions as a sulfur delivery protein for Fe-S cluster synthesis onto IscU, an Fe-S scaffold assembly protein, as well as other S acceptor proteins. This Photobacterium profundum (strain SS9) protein is Cysteine desulfurase IscS.